Reading from the N-terminus, the 349-residue chain is 3-dehydroquinate synthase (349 aa).

Residues 63-68, 97-101, 121-122, K134, K143, and 161-164 contribute to the NAD(+) site; these read DGEDYK, GVIGD, TT, and FLQT. E176, H235, and H252 together coordinate Zn(2+).

It belongs to the sugar phosphate cyclases superfamily. Dehydroquinate synthase family. It depends on Co(2+) as a cofactor. Requires Zn(2+) as cofactor. NAD(+) is required as a cofactor.

It is found in the cytoplasm. It carries out the reaction 7-phospho-2-dehydro-3-deoxy-D-arabino-heptonate = 3-dehydroquinate + phosphate. Its pathway is metabolic intermediate biosynthesis; chorismate biosynthesis; chorismate from D-erythrose 4-phosphate and phosphoenolpyruvate: step 2/7. Functionally, catalyzes the conversion of 3-deoxy-D-arabino-heptulosonate 7-phosphate (DAHP) to dehydroquinate (DHQ). This chain is 3-dehydroquinate synthase, found in Nitratiruptor sp. (strain SB155-2).